Consider the following 304-residue polypeptide: DCN1-like protein 3 (304 aa).

Disordered regions lie at residues 1 to 87 (MGQC…EESS) and 284 to 304 (EVEGRGTLSSGQEGLCPEEQT). G2 is lipidated: N-myristoyl glycine. A DCUN1 domain is found at 86 to 278 (SSLQRLEELF…LFDTFVEWEM (193 aa)).

As to quaternary structure, part of a complex containing DCUN1D3, CUL3 and RBX1. Interacts (via the DCUN1 domain) with the unneddylated cullins: interacts with CUL1, CUL2, CUL3, CUL4A, CUL4B and CUL5; these interactions promote the cullin neddylation and the identity of the cullin dictates the affinity of the interaction. Interacts preferentially with CUL3; this interaction triggers the relocalization of CUL3 to the cell membrane where CUL3 is neddylated. Interacts (via DCUN1 domain) with RBX1. May also interact with regulators or subunits of cullin-RING ligases such as RNF7, ELOB and DDB1; these interactions are bridged by cullins. Interacts (via DCUN1 domain) with CAND1; this interaction is bridged by cullins and strongly inhibits cullin neddylation. These CAND-cullin-DCNL complexes can only be neddylated in the presence of a substrate adapter. Interacts (via DCUN1 domain) with the N-terminally acetylated form of UBE2M and UBE2F. As to expression, highest levels of expression are in the testis. Very low levels of expression in the heart, brain, skeletal muscle, kidney, liver, spleen, lung and ovary.

Its subcellular location is the cell membrane. It localises to the cytoplasm. The protein resides in the nucleus. The protein localises to the perinuclear region. Its function is as follows. Contributes to the neddylation of all cullins by transferring NEDD8 from N-terminally acetylated NEDD8-conjugating E2s enzyme to different cullin C-terminal domain-RBX complexes and may play a role in the cell cycle progression by regulating the SCF ubiquitin E3 ligase complex, after UV damage. At the cell membrane, can promote and as well inhibit cullins neddylation. The sequence is that of DCN1-like protein 3 from Mus musculus (Mouse).